A 663-amino-acid polypeptide reads, in one-letter code: MAATEISVLSEQFTKIKELELMPEKGLKEEEKDGVCREKDHRSPSELEAERTSGAFQDSVLEEEVELVLAPSEESEKYILTLQTVHFTSEAVELQDMSLLSIQQQEGVQVVVQQPGPGLLWLEEGPRQSLQQCVAISIQQELYSPQEMEVLQFHALEENVMVASEDSKLAVSLAETTGLIKLEEEQEKNQLLAERTKEQLFFVETMSGDERSDEIVLTVSNSNVEEQEDQPTAGQADAEKAKSTKNQRKTKGAKGTFHCDVCMFTSSRMSSFNRHMKTHTSEKPHLCHLCLKTFRTVTLLRNHVNTHTGTRPYKCNDCNMAFVTSGELVRHRRYKHTHEKPFKCSMCKYASVEASKLKRHVRSHTGERPFQCCQCSYASRDTYKLKRHMRTHSGEKPYECHICHTRFTQSGTMKIHILQKHGENVPKYQCPHCATIIARKSDLRVHMRNLHAYSAAELKCRYCSAVFHERYALIQHQKTHKNEKRFKCKHCSYACKQERHMTAHIRTHTGEKPFTCLSCNKCFRQKQLLNAHFRKYHDANFIPTVYKCSKCGKGFSRWINLHRHSEKCGSGEAKSAASGKGRRTRKRKQTILKEATKGQKEAAKGWKEAANGDEAAAEEASTTKGEQFPGEMFPVACRETTARVKEEVDEGVTCEMLLNTMDK.

Basic and acidic residues predominate over residues 24 to 51 (EKGLKEEEKDGVCREKDHRSPSELEAER). Disordered stretches follow at residues 24-55 (EKGL…TSGA) and 221-250 (NSNV…QRKT). 10 consecutive C2H2-type zinc fingers follow at residues 257-279 (FHCD…MKTH), 285-307 (HLCH…VNTH), 313-336 (YKCN…RYKH), 342-364 (FKCS…VRSH), 370-392 (FQCC…MRTH), 398-421 (YECH…LQKH), 428-451 (YQCP…RNLH), 458-480 (LKCR…QKTH), 486-508 (FKCK…IRTH), and 514-537 (FTCL…RKYH). Residues 546–568 (YKCSKCGKGFSRWINLHRHSEKC) form a C2H2-type 11; atypical zinc finger. The interval 569-630 (GSGEAKSAAS…STTKGEQFPG (62 aa)) is disordered. Positions 580–590 (KGRRTRKRKQT) are enriched in basic residues. The span at 594–607 (EATKGQKEAAKGWK) shows a compositional bias: basic and acidic residues. Positions 608–620 (EAANGDEAAAEEA) are enriched in low complexity.

The protein belongs to the CTCF zinc-finger protein family. In terms of assembly, interacts with histones, PRMT7 and SETD1A. Interacts (via N-terminus) with BAG6/BAT3. As to expression, testis specific. Specifically expressed in primary spermatocytes.

Its subcellular location is the cytoplasm. It is found in the nucleus. In terms of biological role, testis-specific DNA binding protein responsible for insulator function, nuclear architecture and transcriptional control, which probably acts by recruiting epigenetic chromatin modifiers. Plays a key role in gene imprinting in male germline, by participating in the establishment of differential methylation at the IGF2/H19 imprinted control region (ICR). Directly binds the unmethylated H19 ICR and recruits the PRMT7 methyltransferase, leading to methylate histone H4 'Arg-3' to form H4R3sme2. This probably leads to recruit de novo DNA methyltransferases at these sites. Seems to act as tumor suppressor. In association with DNMT1 and DNMT3B, involved in activation of BAG1 gene expression by binding to its promoter. Required for dimethylation of H3 lysine 4 (H3K4me2) of MYC and BRCA1 promoters. The polypeptide is Transcriptional repressor CTCFL (CTCFL) (Homo sapiens (Human)).